Consider the following 2058-residue polypeptide: Unconventional myosin-X (2058 aa).

Residue Met-1 is modified to N-acetylmethionine. One can recognise a Myosin motor domain in the interval 63 to 739 (EGVDDMASLT…LEQKLEKRRE (677 aa)). Residues Asn-104, Tyr-113, 160-165 (GAGKTE), and Asn-215 contribute to the ATP site. Residues 619 to 641 (LHSLMATLSSSNPFFVRCIKPNM) are actin-binding. 3 IQ domains span residues 742–763 (VSHA…KQYR), 764–787 (KVLY…RFLH), and 788–817 (LKKA…EKRE). Residues 814 to 883 (EKREQEEKKK…LTRELEKQKE (70 aa)) are SAH. 2 disordered regions span residues 819–840 (EEKK…RERE) and 847–866 (ELRA…EALQ). Residues 847–861 (ELRAQQEEETRKQQE) show a composition bias toward basic and acidic residues. Residues 884–934 (NKQVEEILRLEKEIEDLQRMKEQQELSLTEASLQKLQERRDQELRRLEEEA) are a coiled coil. Ser-962, Ser-965, and Ser-968 each carry phosphoserine. The tract at residues 964 to 1090 (GSEFSSELAE…DLPSPDGDYD (127 aa)) is disordered. Residues 989–1003 (PEEEVDEGFEADDDA) show a composition bias toward acidic residues. Residues 1040-1049 (VVPTSPSADS) are compositionally biased toward polar residues. The span at 1060–1071 (SGSLHNSSSGES) shows a compositional bias: low complexity. The residue at position 1158 (Thr-1158) is a Phosphothreonine. PH domains lie at 1212-1310 (EALK…QVHA) and 1392-1497 (EFIV…NVTD). One can recognise a MyTH4 domain in the interval 1547–1695 (LPYGDINLNL…PSRDEIEALI (149 aa)). The 345-residue stretch at 1700–2044 (MTSTVYCHGG…AYISMIVKKR (345 aa)) folds into the FERM domain.

The protein belongs to the TRAFAC class myosin-kinesin ATPase superfamily. Myosin family. In terms of assembly, monomer, when in an inactive conformation in the cytosol. Homodimer in its active, membrane-bound conformation; antiparallel coiled coil-mediated dimer formation. Interacts strongly with CALM3 and weakly with CALM, the CALM3 interaction is essential for function in filopodial extension and motility. Interacts with ECPAS. Interacts with NEO1. Interacts with ITGB1 and ITGB3. Interacts with VASP. Interacts with DCC and ITGB5; the presence of DCC inhibits ITGB5 binding. Interacts with tubulin; ITGB5 or DCC binding inhibits tubulin binding. In terms of processing, the initiator methionine for isoform Headless is removed. Ubiquitous.

It localises to the cytoplasm. It is found in the cytosol. The protein localises to the cell projection. Its subcellular location is the lamellipodium. The protein resides in the ruffle. It localises to the cytoskeleton. It is found in the filopodium tip. The protein localises to the cell cortex. Its subcellular location is the filopodium membrane. In terms of biological role, myosins are actin-based motor molecules with ATPase activity. Unconventional myosins serve in intracellular movements. MYO10 binds to actin filaments and actin bundles and functions as a plus end-directed motor. Moves with higher velocity and takes larger steps on actin bundles than on single actin filaments. The tail domain binds to membranous compartments containing phosphatidylinositol 3,4,5-trisphosphate or integrins, and mediates cargo transport along actin filaments. Regulates cell shape, cell spreading and cell adhesion. Stimulates the formation and elongation of filopodia. In hippocampal neurons it induces the formation of dendritic filopodia by trafficking the actin-remodeling protein VASP to the tips of filopodia, where it promotes actin elongation. Plays a role in formation of the podosome belt in osteoclasts. Functionally, functions as a dominant-negative regulator of isoform 1, suppressing its filopodia-inducing and axon outgrowth-promoting activities. In hippocampal neurons, it increases VASP retention in spine heads to induce spine formation and spine head expansion. This Homo sapiens (Human) protein is Unconventional myosin-X (MYO10).